The sequence spans 242 residues: Transcriptional regulatory protein GltR (242 aa).

The 117-residue stretch at Ser-7–Leu-123 folds into the Response regulatory domain. The residue at position 56 (Asp-56) is a 4-aspartylphosphate. The segment at residues Gly-134–Ala-234 is a DNA-binding region (ompR/PhoB-type).

In terms of processing, phosphorylated by GtrS.

The protein localises to the cytoplasm. With respect to regulation, phosphorylation of GltR induces its dissociation from DNA leading to transcriptional activation. Its function is as follows. Member of the two-component regulatory system GtrS/GltR involved in the regulation of glucose metabolism and transport, as well as regulation of the exotoxin A gene expression. GltR controls the transcription of genes involved in glucose metabolism (glk and edd/gap-1) and transport (oprB) as well as the expression of toxA that encodes exotoxin A, the primary virulence factor. Acts as a repressor that is released from its target operators upon phosphorylation. In terms of biological role, contributes to modulation of the type III secretion system (T3SS) in response to host cells via the regulation of the OprB transport system. The polypeptide is Transcriptional regulatory protein GltR (Pseudomonas aeruginosa (strain ATCC 15692 / DSM 22644 / CIP 104116 / JCM 14847 / LMG 12228 / 1C / PRS 101 / PAO1)).